Here is a 388-residue protein sequence, read N- to C-terminus: Succinate--CoA ligase [ADP-forming] subunit beta (388 aa).

The ATP-grasp domain maps to 9-244 (KQLFAEFGLP…PSQEDEREAH (236 aa)). ATP is bound by residues Lys-46, 53–55 (GRG), Glu-99, Ser-102, and Glu-107. Asn-199 and Asp-213 together coordinate Mg(2+). Substrate is bound by residues Asn-264 and 321-323 (GIV).

This sequence belongs to the succinate/malate CoA ligase beta subunit family. Heterotetramer of two alpha and two beta subunits. Mg(2+) serves as cofactor.

The catalysed reaction is succinate + ATP + CoA = succinyl-CoA + ADP + phosphate. It carries out the reaction GTP + succinate + CoA = succinyl-CoA + GDP + phosphate. Its pathway is carbohydrate metabolism; tricarboxylic acid cycle; succinate from succinyl-CoA (ligase route): step 1/1. Functionally, succinyl-CoA synthetase functions in the citric acid cycle (TCA), coupling the hydrolysis of succinyl-CoA to the synthesis of either ATP or GTP and thus represents the only step of substrate-level phosphorylation in the TCA. The beta subunit provides nucleotide specificity of the enzyme and binds the substrate succinate, while the binding sites for coenzyme A and phosphate are found in the alpha subunit. This is Succinate--CoA ligase [ADP-forming] subunit beta from Vibrio parahaemolyticus serotype O3:K6 (strain RIMD 2210633).